Consider the following 140-residue polypeptide: Ribonuclease P protein component (140 aa).

Belongs to the RnpA family. As to quaternary structure, consists of a catalytic RNA component (M1 or rnpB) and a protein subunit.

It carries out the reaction Endonucleolytic cleavage of RNA, removing 5'-extranucleotides from tRNA precursor.. In terms of biological role, RNaseP catalyzes the removal of the 5'-leader sequence from pre-tRNA to produce the mature 5'-terminus. It can also cleave other RNA substrates such as 4.5S RNA. The protein component plays an auxiliary but essential role in vivo by binding to the 5'-leader sequence and broadening the substrate specificity of the ribozyme. This is Ribonuclease P protein component from Nostoc punctiforme (strain ATCC 29133 / PCC 73102).